Reading from the N-terminus, the 522-residue chain is Sugar carrier protein A (522 aa).

Topologically, residues 1 to 22 (MAGGSLAPAGVAKERAEQYQGK) are cytoplasmic. Helical transmembrane passes span 23 to 43 (VTFA…IFGY), 87 to 107 (AFTS…GPIT), 121 to 141 (ISFL…MLLL), 144 to 164 (IMLG…LSEM), 173 to 193 (LNIM…MVNY), 205 to 225 (LSLG…LLLP), 286 to 306 (LVMA…IILF), 322 to 342 (ALYS…ISIA), 351 to 371 (FLLI…AIIL), 384 to 404 (SFSV…GWSW), 430 to 450 (AVNL…LCAF), and 453 to 473 (GIFL…YIFL). Topologically, residues 474 to 522 (PETKGVPIEEMIFLWRKHWFWKKIVPGQPEVDDSRESMEMGEAVASRIK) are cytoplasmic.

This sequence belongs to the major facilitator superfamily. Sugar transporter (TC 2.A.1.1) family.

The protein localises to the membrane. In Ricinus communis (Castor bean), this protein is Sugar carrier protein A (STA).